We begin with the raw amino-acid sequence, 29 residues long: NAD(P)H-quinone oxidoreductase subunit 5, chloroplastic (29 aa).

Residues 1–15 (SGSIIHSMEANVGYS) form a helical membrane-spanning segment.

It belongs to the complex I subunit 5 family. In terms of assembly, NDH is composed of at least 16 different subunits, 5 of which are encoded in the nucleus.

It is found in the plastid. Its subcellular location is the chloroplast thylakoid membrane. The catalysed reaction is a plastoquinone + NADH + (n+1) H(+)(in) = a plastoquinol + NAD(+) + n H(+)(out). The enzyme catalyses a plastoquinone + NADPH + (n+1) H(+)(in) = a plastoquinol + NADP(+) + n H(+)(out). Its function is as follows. NDH shuttles electrons from NAD(P)H:plastoquinone, via FMN and iron-sulfur (Fe-S) centers, to quinones in the photosynthetic chain and possibly in a chloroplast respiratory chain. The immediate electron acceptor for the enzyme in this species is believed to be plastoquinone. Couples the redox reaction to proton translocation, and thus conserves the redox energy in a proton gradient. The polypeptide is NAD(P)H-quinone oxidoreductase subunit 5, chloroplastic (Pseudotsuga menziesii (Douglas-fir)).